We begin with the raw amino-acid sequence, 233 residues long: 2,3,4,5-tetrahydropyridine-2,6-dicarboxylate N-acetyltransferase (233 aa).

It belongs to the transferase hexapeptide repeat family. DapH subfamily.

It carries out the reaction (S)-2,3,4,5-tetrahydrodipicolinate + acetyl-CoA + H2O = L-2-acetamido-6-oxoheptanedioate + CoA. The protein operates within amino-acid biosynthesis; L-lysine biosynthesis via DAP pathway; LL-2,6-diaminopimelate from (S)-tetrahydrodipicolinate (acetylase route): step 1/3. In terms of biological role, catalyzes the transfer of an acetyl group from acetyl-CoA to tetrahydrodipicolinate. The protein is 2,3,4,5-tetrahydropyridine-2,6-dicarboxylate N-acetyltransferase of Oenococcus oeni (strain ATCC BAA-331 / PSU-1).